Reading from the N-terminus, the 325-residue chain is Putative 1-aminocyclopropane-1-carboxylate deaminase (325 aa).

Lysine 54 carries the post-translational modification N6-(pyridoxal phosphate)lysine.

It belongs to the ACC deaminase/D-cysteine desulfhydrase family. Pyridoxal 5'-phosphate serves as cofactor.

It carries out the reaction 1-aminocyclopropane-1-carboxylate + H2O = 2-oxobutanoate + NH4(+). The chain is Putative 1-aminocyclopropane-1-carboxylate deaminase from Pyrococcus horikoshii (strain ATCC 700860 / DSM 12428 / JCM 9974 / NBRC 100139 / OT-3).